We begin with the raw amino-acid sequence, 872 residues long: Alanine--tRNA ligase (872 aa).

Zn(2+) is bound by residues H567, H571, C669, and H673.

The protein belongs to the class-II aminoacyl-tRNA synthetase family. It depends on Zn(2+) as a cofactor.

It localises to the cytoplasm. The catalysed reaction is tRNA(Ala) + L-alanine + ATP = L-alanyl-tRNA(Ala) + AMP + diphosphate. In terms of biological role, catalyzes the attachment of alanine to tRNA(Ala) in a two-step reaction: alanine is first activated by ATP to form Ala-AMP and then transferred to the acceptor end of tRNA(Ala). Also edits incorrectly charged Ser-tRNA(Ala) and Gly-tRNA(Ala) via its editing domain. In Streptococcus sanguinis (strain SK36), this protein is Alanine--tRNA ligase.